The following is a 203-amino-acid chain: Small ribosomal subunit protein uS4 (203 aa).

Residues 93-156 (RRLDNVVYRL…MKVPAILEAV (64 aa)) enclose the S4 RNA-binding domain.

It belongs to the universal ribosomal protein uS4 family. In terms of assembly, part of the 30S ribosomal subunit. Contacts protein S5. The interaction surface between S4 and S5 is involved in control of translational fidelity.

Functionally, one of the primary rRNA binding proteins, it binds directly to 16S rRNA where it nucleates assembly of the body of the 30S subunit. In terms of biological role, with S5 and S12 plays an important role in translational accuracy. In Streptococcus pyogenes serotype M4 (strain MGAS10750), this protein is Small ribosomal subunit protein uS4.